A 412-amino-acid polypeptide reads, in one-letter code: Argininosuccinate synthase (412 aa).

ATP-binding positions include 16–24 and Ala-44; that span reads AYSGGLDTS. Residues Tyr-96 and Ser-101 each contribute to the L-citrulline site. Gly-126 is an ATP binding site. Thr-128, Asn-132, and Asp-133 together coordinate L-aspartate. Position 132 (Asn-132) interacts with L-citrulline. L-citrulline contacts are provided by Arg-136, Ser-185, Ser-194, Glu-270, and Tyr-282.

Belongs to the argininosuccinate synthase family. Type 1 subfamily. In terms of assembly, homotetramer.

It localises to the cytoplasm. The catalysed reaction is L-citrulline + L-aspartate + ATP = 2-(N(omega)-L-arginino)succinate + AMP + diphosphate + H(+). It functions in the pathway amino-acid biosynthesis; L-arginine biosynthesis; L-arginine from L-ornithine and carbamoyl phosphate: step 2/3. This is Argininosuccinate synthase from Shewanella baltica (strain OS185).